Reading from the N-terminus, the 114-residue chain is MINVYDTANQLEKDLRESQEYKDLQAVVAKVKADDATFAVYKKLREAQKTLQEQQMQGTLDEKVMKSLQEISQEASQYPLMMELMEKERAISVLIDDLNKIIFKPLSEVYDIEG.

It belongs to the UPF0342 family.

The sequence is that of UPF0342 protein LSL_0473 from Ligilactobacillus salivarius (strain UCC118) (Lactobacillus salivarius).